A 373-amino-acid polypeptide reads, in one-letter code: Polygalacturonase (373 aa).

An N-terminal signal peptide occupies residues Met-1 to Arg-24. A disulfide bridge connects residues Cys-27 and Cys-42. 2 N-linked (GlcNAc...) asparagine glycosylation sites follow: Asn-65 and Asn-94. PbH1 repeat units lie at residues Thr-136–Gly-158, Ser-159–Ser-197, Ser-198–Ser-219, Gly-220–Ser-240, Val-249–Ser-270, Ile-278–Gln-300, Thr-312–Ala-333, and Cys-345–Asn-369. The active-site Proton donor is Asp-212. The cysteines at positions 214 and 230 are disulfide-linked. His-234 is an active-site residue. 2 N-linked (GlcNAc...) asparagine glycosylation sites follow: Asn-280 and Asn-290. 2 cysteine pairs are disulfide-bonded: Cys-340–Cys-345 and Cys-364–Cys-371.

This sequence belongs to the glycosyl hydrolase 28 family.

It localises to the secreted. It catalyses the reaction (1,4-alpha-D-galacturonosyl)n+m + H2O = (1,4-alpha-D-galacturonosyl)n + (1,4-alpha-D-galacturonosyl)m.. Its function is as follows. Involved in maceration and soft-rotting of plant tissue. Hydrolyzes the 1,4-alpha glycosidic bonds of de-esterified pectate in the smooth region of the plant cell wall. The protein is Polygalacturonase (PGA) of Fusarium fujikuroi (Bakanae and foot rot disease fungus).